The following is a 298-amino-acid chain: Acetylglutamate kinase (298 aa).

Substrate is bound by residues 69 to 70 (GG), R91, and N196.

It belongs to the acetylglutamate kinase family. ArgB subfamily.

The protein resides in the cytoplasm. It carries out the reaction N-acetyl-L-glutamate + ATP = N-acetyl-L-glutamyl 5-phosphate + ADP. Its pathway is amino-acid biosynthesis; L-arginine biosynthesis; N(2)-acetyl-L-ornithine from L-glutamate: step 2/4. Functionally, catalyzes the ATP-dependent phosphorylation of N-acetyl-L-glutamate. The chain is Acetylglutamate kinase from Rhodopseudomonas palustris (strain BisB5).